A 184-amino-acid chain; its full sequence is Phosphodiesterase YfcE (184 aa).

Mn(2+) contacts are provided by Asp-9, His-11, Asp-37, Asn-73, His-105, His-127, and His-129.

It belongs to the metallophosphoesterase superfamily. YfcE family. The cofactor is Mn(2+).

Functionally, shows phosphodiesterase activity. This Escherichia coli O157:H7 protein is Phosphodiesterase YfcE (yfcE).